The sequence spans 348 residues: Phospho-2-dehydro-3-deoxyheptonate aldolase, Trp-sensitive (348 aa).

It belongs to the class-I DAHP synthase family.

It carries out the reaction D-erythrose 4-phosphate + phosphoenolpyruvate + H2O = 7-phospho-2-dehydro-3-deoxy-D-arabino-heptonate + phosphate. Its pathway is metabolic intermediate biosynthesis; chorismate biosynthesis; chorismate from D-erythrose 4-phosphate and phosphoenolpyruvate: step 1/7. In terms of biological role, stereospecific condensation of phosphoenolpyruvate (PEP) and D-erythrose-4-phosphate (E4P) giving rise to 3-deoxy-D-arabino-heptulosonate-7-phosphate (DAHP). The polypeptide is Phospho-2-dehydro-3-deoxyheptonate aldolase, Trp-sensitive (aroH) (Escherichia coli O157:H7).